A 370-amino-acid chain; its full sequence is MKKVIVGISGGVDSSVSAYLLKLRGYDVMGVFMQNWDPYINKESNNDAIKSKLDTCEAEYDYQIASKVCQRLGIKLERINFIKEYWDMVFEPFLDEYKKGLTPNPDILCNKYIKFGAFHKYCFENFDCDYIATGHYADVRFNQANNIYELLEAKDIEKDQTYFLCSLNQSQLSKSIFPLADLTKKEVREIANKIGLDNWDKKDSTGICFIGERNFKNFLHNYIDKKPGKIIDIDTSKEVGTHEGIHFYTIGQRKGLNLGGNSSRYFVCKKDISNNILYVTSNESKLKNLSSVVATCSYFNWIGYVPNNNKVEIRIRHSKNKINGHFKILKDNVVQFEFDSPEVISPGQYIVAYQKGVCLGGGPIKDNINE.

Residues 7 to 14 (GISGGVDS) and Met-33 contribute to the ATP site. The segment at 104 to 106 (NPD) is interaction with target base in tRNA. Residue Cys-109 is the Nucleophile of the active site. Cys-109 and Cys-208 are oxidised to a cystine. Residue Gly-134 participates in ATP binding. An interaction with tRNA region spans residues 158–160 (KDQ). The active-site Cysteine persulfide intermediate is the Cys-208.

It belongs to the MnmA/TRMU family.

It is found in the cytoplasm. It catalyses the reaction S-sulfanyl-L-cysteinyl-[protein] + uridine(34) in tRNA + AH2 + ATP = 2-thiouridine(34) in tRNA + L-cysteinyl-[protein] + A + AMP + diphosphate + H(+). Functionally, catalyzes the 2-thiolation of uridine at the wobble position (U34) of tRNA, leading to the formation of s(2)U34. The sequence is that of tRNA-specific 2-thiouridylase MnmA from Malacoplasma penetrans (strain HF-2) (Mycoplasma penetrans).